We begin with the raw amino-acid sequence, 273 residues long: Octanoyltransferase (273 aa).

Residues 35 to 254 (DRVPDTCLLL…HLRDILENAE (220 aa)) enclose the BPL/LPL catalytic domain. Substrate contacts are provided by residues 73–80 (RGGKITWH), 184–186 (AIG), and 197–199 (GFA). Catalysis depends on Cys-215, which acts as the Acyl-thioester intermediate.

This sequence belongs to the LipB family.

Its subcellular location is the cytoplasm. The catalysed reaction is octanoyl-[ACP] + L-lysyl-[protein] = N(6)-octanoyl-L-lysyl-[protein] + holo-[ACP] + H(+). The protein operates within protein modification; protein lipoylation via endogenous pathway; protein N(6)-(lipoyl)lysine from octanoyl-[acyl-carrier-protein]: step 1/2. Its function is as follows. Catalyzes the transfer of endogenously produced octanoic acid from octanoyl-acyl-carrier-protein onto the lipoyl domains of lipoate-dependent enzymes. Lipoyl-ACP can also act as a substrate although octanoyl-ACP is likely to be the physiological substrate. In Streptomyces griseus subsp. griseus (strain JCM 4626 / CBS 651.72 / NBRC 13350 / KCC S-0626 / ISP 5235), this protein is Octanoyltransferase.